The sequence spans 62 residues: Large ribosomal subunit protein uL30 (62 aa).

It belongs to the universal ribosomal protein uL30 family. Part of the 50S ribosomal subunit.

The protein is Large ribosomal subunit protein uL30 of Nitrosospira multiformis (strain ATCC 25196 / NCIMB 11849 / C 71).